Reading from the N-terminus, the 537-residue chain is Hydroxylamine reductase (537 aa).

[4Fe-4S] cluster contacts are provided by C3, C6, C15, and C21. Hybrid [4Fe-2O-2S] cluster contacts are provided by H239, E263, C307, C393, C421, C446, E480, and K482. A Cysteine persulfide modification is found at C393.

The protein belongs to the HCP family. [4Fe-4S] cluster is required as a cofactor. Requires hybrid [4Fe-2O-2S] cluster as cofactor.

The protein resides in the cytoplasm. The catalysed reaction is A + NH4(+) + H2O = hydroxylamine + AH2 + H(+). In terms of biological role, catalyzes the reduction of hydroxylamine to form NH(3) and H(2)O. The sequence is that of Hydroxylamine reductase from Lawsonia intracellularis (strain PHE/MN1-00).